We begin with the raw amino-acid sequence, 219 residues long: tRNA (guanine-N(7)-)-methyltransferase (219 aa).

4 residues coordinate S-adenosyl-L-methionine: E44, D69, E102, and N125. Substrate-binding residues include K129 and D161.

The protein belongs to the class I-like SAM-binding methyltransferase superfamily. TrmB family.

The enzyme catalyses guanosine(46) in tRNA + S-adenosyl-L-methionine = N(7)-methylguanosine(46) in tRNA + S-adenosyl-L-homocysteine. It functions in the pathway tRNA modification; N(7)-methylguanine-tRNA biosynthesis. Its function is as follows. Catalyzes the formation of N(7)-methylguanine at position 46 (m7G46) in tRNA. The polypeptide is tRNA (guanine-N(7)-)-methyltransferase (Clostridium perfringens (strain 13 / Type A)).